The chain runs to 146 residues: Putative nickel-responsive regulator 1 (146 aa).

His-81, His-92, Tyr-94, and Cys-100 together coordinate Ni(2+).

This sequence belongs to the transcriptional regulatory CopG/NikR family. It depends on Ni(2+) as a cofactor.

Transcriptional regulator. This chain is Putative nickel-responsive regulator 1, found in Methanosarcina mazei (strain ATCC BAA-159 / DSM 3647 / Goe1 / Go1 / JCM 11833 / OCM 88) (Methanosarcina frisia).